Here is a 1377-residue protein sequence, read N- to C-terminus: Temperature-sensitive hemagglutinin tsh autotransporter (1377 aa).

An N-terminal signal peptide occupies residues 1 to 52 (MNRIYSLRYSAVARGFIAVSEFARKCVHKSVRRLCFPVLLLIPVLFSAGSLA). Residues 53 to 302 (GTVNNELGYQ…AVIPLDFIGQ (250 aa)) enclose the Peptidase S6 domain. Residues His125, Asp153, and Ser259 each act as charge relay system in the active site. Residues 1111 to 1377 (DINGEAGTWV…AINANIRYSF (267 aa)) enclose the Autotransporter domain.

The C-terminus is blocked. In terms of processing, cleaved to release the mature protein from the outer membrane.

It is found in the periplasm. The protein localises to the secreted. The protein resides in the cell surface. It localises to the cell outer membrane. Contributes to the development of lesions and deposition of fibrin in the avian air sacs. It can act both as an adhesin and as a serine protease. Agglutinates erythrocytes while in contact with the extracellular surface of the bacterial cells. Can adhere to purified hemoglobin and bind with great efficiency to extracellular matrix proteins. Cleaves casein and exhibits mucinolytic activity. In Escherichia coli, this protein is Temperature-sensitive hemagglutinin tsh autotransporter (tsh).